We begin with the raw amino-acid sequence, 380 residues long: Cytochrome b (380 aa).

4 helical membrane passes run 34 to 54, 78 to 99, 114 to 134, and 179 to 199; these read FGSLLALCLMTQILTGLLLAM, WLIRNMHANGASFFFICIYMHI, WNTGILLLLTLMATAFVGYVL, and FFALHFLLPFMIAGLTLIHLT. Heme b-binding residues include His-84 and His-98. Heme b-binding residues include His-183 and His-197. His-202 provides a ligand contact to a ubiquinone. Transmembrane regions (helical) follow at residues 227-247, 289-309, 321-341, and 348-368; these read LKDILGLTLLLLPLTTMALFS, LGGVLALAASVLVLFLSPLLH, LSQLLFWTLVANLLILTWIGS, and FIIIGQLASTTYFIILLILFP.

This sequence belongs to the cytochrome b family. As to quaternary structure, the cytochrome bc1 complex contains 11 subunits: 3 respiratory subunits (MT-CYB, CYC1 and UQCRFS1), 2 core proteins (UQCRC1 and UQCRC2) and 6 low-molecular weight proteins (UQCRH/QCR6, UQCRB/QCR7, UQCRQ/QCR8, UQCR10/QCR9, UQCR11/QCR10 and a cleavage product of UQCRFS1). This cytochrome bc1 complex then forms a dimer. Heme b serves as cofactor.

The protein localises to the mitochondrion inner membrane. Component of the ubiquinol-cytochrome c reductase complex (complex III or cytochrome b-c1 complex) that is part of the mitochondrial respiratory chain. The b-c1 complex mediates electron transfer from ubiquinol to cytochrome c. Contributes to the generation of a proton gradient across the mitochondrial membrane that is then used for ATP synthesis. The polypeptide is Cytochrome b (MT-CYB) (Hydrobates pelagicus (European storm-petrel)).